A 469-amino-acid chain; its full sequence is UDP-N-acetylmuramate--L-alanine ligase (469 aa).

Position 122–128 (122–128) interacts with ATP; it reads GTHGKTT.

The protein belongs to the MurCDEF family.

The protein localises to the cytoplasm. It carries out the reaction UDP-N-acetyl-alpha-D-muramate + L-alanine + ATP = UDP-N-acetyl-alpha-D-muramoyl-L-alanine + ADP + phosphate + H(+). It participates in cell wall biogenesis; peptidoglycan biosynthesis. Functionally, cell wall formation. The chain is UDP-N-acetylmuramate--L-alanine ligase from Legionella pneumophila (strain Lens).